The chain runs to 472 residues: Gamma-glutamylputrescine synthetase PuuA (472 aa).

The GS beta-grasp domain occupies 35-129; the sequence is PNTQYVDVLL…MLLTMVDEDG (95 aa). Residues 136 to 472 form the GS catalytic domain; sequence PRNVLNRLWQ…TEIEWMLKNA (337 aa).

Belongs to the glutamine synthetase family. In terms of assembly, dodecamer. Mg(2+) is required as a cofactor. Requires Mn(2+) as cofactor.

It catalyses the reaction putrescine + L-glutamate + ATP = gamma-L-glutamylputrescine + ADP + phosphate + H(+). The protein operates within amine and polyamine degradation; putrescine degradation; 4-aminobutanoate from putrescine: step 1/4. Functionally, involved in the breakdown of putrescine. Catalyzes the ATP-dependent gamma-glutamylation of putrescine, producing gamma-L-glutamylputrescine. Absolutely essential to utilize putrescine as both nitrogen and carbon sources and to decrease the toxicity of putrescine, which can lead to inhibition of cell growth and protein synthesis. In vitro is also able to use several diamines, and spermidine and spermine, instead of putrescine, but with a much lower activity, and cannot catalyze the gamma-glutamylation of ornithine or GABA. The polypeptide is Gamma-glutamylputrescine synthetase PuuA (Escherichia coli (strain K12)).